Reading from the N-terminus, the 169-residue chain is uncharacterized protein (169 aa).

Disordered regions lie at residues 32 to 53 and 148 to 169; these read VSGP…APAP and VSGS…AGGA.

This is an uncharacterized protein from Homo sapiens (Human).